A 221-amino-acid polypeptide reads, in one-letter code: GTP-binding nuclear protein Ran-1 (221 aa).

Residues 10 to 174 form the Small GTPase Ran-type domain; the sequence is DYPSFKLVIV…LYLARKLAGD (165 aa). Position 21–28 (21–28) interacts with GTP; it reads DGGTGKTT. The tract at residues 40 to 48 is switch-I; sequence KKYEPTIGV. Residues glycine 71, 125–128, and 153–155 each bind GTP; these read NKVD and SAK. A switch-II region spans residues 71–87; that stretch reads GQEKFGGLRDGYYIHGQ.

This sequence belongs to the small GTPase superfamily. Ran family. In terms of assembly, found in a nuclear export complex with RanGTP, exportin and pre-miRNA.

The protein localises to the nucleus. Functionally, GTP-binding protein involved in nucleocytoplasmic transport. Required for the import of protein into the nucleus and also for RNA export. Involved in chromatin condensation and control of cell cycle. The protein is GTP-binding nuclear protein Ran-1 (RAN1) of Oryza sativa subsp. indica (Rice).